A 66-amino-acid polypeptide reads, in one-letter code: Movement protein TGBp3 (66 aa).

The Lumenal segment spans residues 1–2 (MD). A helical transmembrane segment spans residues 3 to 23 (FTTLIIIGVYLLVFIVYFAKI). The Cytoplasmic segment spans residues 24-66 (NTSVCTISISGASIEISGCDNPTLFEILPKLRPFNHGLSLPSN).

Belongs to the Tymovirales TGBp3 protein family.

It localises to the host endoplasmic reticulum membrane. In terms of biological role, plays a role in viral cell-to-cell propagation, by facilitating genome transport to neighboring plant cells through plasmosdesmata. May induce the formation of granular vesicles derived from the Endoplasmic reticulum, which align on actin filaments. The protein is Movement protein TGBp3 of Trifolium (WCMV).